A 90-amino-acid polypeptide reads, in one-letter code: Mitochondrial import inner membrane translocase subunit Tim8 A (90 aa).

The Twin CX3C motif motif lies at Cys-36–Cys-59. 2 disulfide bridges follow: Cys-36–Cys-59 and Cys-40–Cys-55.

The protein belongs to the small Tim family. In terms of assembly, heterohexamer; composed of 3 copies of TIMM8A and 3 copies of TIMM13, named soluble 70 kDa complex. Associates with the TIM22 complex, whose core is composed of TIMM22.

The protein resides in the mitochondrion inner membrane. Its function is as follows. Mitochondrial intermembrane chaperone that participates in the import and insertion of some multi-pass transmembrane proteins into the mitochondrial inner membrane. Also required for the transfer of beta-barrel precursors from the TOM complex to the sorting and assembly machinery (SAM complex) of the outer membrane. Acts as a chaperone-like protein that protects the hydrophobic precursors from aggregation and guide them through the mitochondrial intermembrane space. The TIMM8-TIMM13 complex mediates the import of some proteins while the predominant TIMM9-TIMM10 70 kDa complex mediates the import of much more proteins. The polypeptide is Mitochondrial import inner membrane translocase subunit Tim8 A (timm8a) (Takifugu rubripes (Japanese pufferfish)).